We begin with the raw amino-acid sequence, 132 residues long: Transcriptional repressor SmtB homolog (132 aa).

Zn(2+) is bound by residues Cys-20, His-26, Cys-71, Cys-73, Asp-114, His-116, His-127, and Glu-130. One can recognise an HTH arsR-type domain in the interval 38 to 132; that stretch reads MSLDQAQQMA…EVADHLQESD (95 aa). The segment at residues 72 to 91 is a DNA-binding region (H-T-H motif); the sequence is VCDLAAAMKVSESAVSHQLR.

As to quaternary structure, homodimer.

Functionally, transcriptional repressor of the expression of the ziaA gene. Controls zinc homeostasis by triggering ZiaA-mediated efflux of excess zinc into the periplasm. The protein is Transcriptional repressor SmtB homolog (ziaR) of Synechocystis sp. (strain ATCC 27184 / PCC 6803 / Kazusa).